The sequence spans 202 residues: Ribosome biogenesis regulatory protein homolog (202 aa).

The segment at 82 to 103 (TLPPPTTPLPREKPVPQPKPET) is disordered.

The protein belongs to the RRS1 family. Component of a hexameric 5S RNP precursor complex, composed of 5S RNA, RRS1, RPF2, RPL5, RPL11 and SYO1; this complex acts as a precursor for ribosome assembly.

The protein localises to the nucleus. Functionally, involved in ribosomal large subunit assembly. This is Ribosome biogenesis regulatory protein homolog from Chaetomium thermophilum (strain DSM 1495 / CBS 144.50 / IMI 039719) (Thermochaetoides thermophila).